A 533-amino-acid chain; its full sequence is AAA-ATPase At5g17740 (533 aa).

Residues 11–27 (ASMFSTYASMMGYVMII) traverse the membrane as a helical segment. Residue 252 to 259 (GPPGTGKS) participates in ATP binding.

Belongs to the AAA ATPase family. BCS1 subfamily. Mg(2+) is required as a cofactor.

Its subcellular location is the membrane. It carries out the reaction ATP + H2O = ADP + phosphate + H(+). This chain is AAA-ATPase At5g17740, found in Arabidopsis thaliana (Mouse-ear cress).